The chain runs to 428 residues: L-gulono-1,4-lactone dehydrogenase (428 aa).

The 168-residue stretch at 12–179 (QVCAPSAIVR…SQVTLQTVPL (168 aa)) folds into the FAD-binding PCMH-type domain.

This sequence belongs to the oxygen-dependent FAD-linked oxidoreductase family. A divalent metal cation is required as a cofactor.

The catalysed reaction is L-gulono-1,4-lactone + 2 Fe(III)-[cytochrome c] = L-ascorbate + 2 Fe(II)-[cytochrome c] + 3 H(+). The protein operates within cofactor biosynthesis; L-ascorbate biosynthesis. Oxidizes L-gulono-1,4-lactone to L-xylo-hexulonolactone which spontaneously isomerizes to L-ascorbate. This chain is L-gulono-1,4-lactone dehydrogenase, found in Mycobacterium tuberculosis (strain CDC 1551 / Oshkosh).